Here is a 202-residue protein sequence, read N- to C-terminus: Small ribosomal subunit protein uS4 (202 aa).

The tract at residues 22–48 (TGKELARRPYAPGDHGQGRRGKLSEYG) is disordered. The S4 RNA-binding domain occupies 93–154 (RRLDNMVYRL…KSKKLAVITG (62 aa)).

This sequence belongs to the universal ribosomal protein uS4 family. In terms of assembly, part of the 30S ribosomal subunit. Contacts protein S5. The interaction surface between S4 and S5 is involved in control of translational fidelity.

In terms of biological role, one of the primary rRNA binding proteins, it binds directly to 16S rRNA where it nucleates assembly of the body of the 30S subunit. With S5 and S12 plays an important role in translational accuracy. The protein is Small ribosomal subunit protein uS4 of Lactiplantibacillus plantarum (strain ATCC BAA-793 / NCIMB 8826 / WCFS1) (Lactobacillus plantarum).